Reading from the N-terminus, the 440-residue chain is NADH-quinone oxidoreductase subunit D 1 (440 aa).

Belongs to the complex I 49 kDa subunit family. In terms of assembly, NDH-1 is composed of 14 different subunits. Subunits NuoB, C, D, E, F, and G constitute the peripheral sector of the complex.

It localises to the cell membrane. It catalyses the reaction a quinone + NADH + 5 H(+)(in) = a quinol + NAD(+) + 4 H(+)(out). Functionally, NDH-1 shuttles electrons from NADH, via FMN and iron-sulfur (Fe-S) centers, to quinones in the respiratory chain. The immediate electron acceptor for the enzyme in this species is believed to be a menaquinone. Couples the redox reaction to proton translocation (for every two electrons transferred, four hydrogen ions are translocated across the cytoplasmic membrane), and thus conserves the redox energy in a proton gradient. The chain is NADH-quinone oxidoreductase subunit D 1 from Streptomyces griseus subsp. griseus (strain JCM 4626 / CBS 651.72 / NBRC 13350 / KCC S-0626 / ISP 5235).